We begin with the raw amino-acid sequence, 705 residues long: Zinc finger protein 770 (705 aa).

Lys16 participates in a covalent cross-link: Glycyl lysine isopeptide (Lys-Gly) (interchain with G-Cter in SUMO2). 3 C2H2-type zinc fingers span residues 31–53 (YICN…YLIH), 59–81 (FECD…QLTH), and 85–107 (FSCN…QQLH). Residues Lys116, Lys124, and Lys149 each participate in a glycyl lysine isopeptide (Lys-Gly) (interchain with G-Cter in SUMO2) cross-link. 3 C2H2-type zinc fingers span residues 164-186 (HACT…SLIH), 192-214 (FKCV…QLTH), and 220-242 (FQCC…KQIH). Lys266 is covalently cross-linked (Glycyl lysine isopeptide (Lys-Gly) (interchain with G-Cter in SUMO2)). Residues 298 to 322 (FQCSECEECFESEQILNGHKCLPAR) form a C2H2-type 7; degenerate zinc finger. 4 C2H2-type zinc fingers span residues 485–507 (CPCD…YLIH), 513–535 (FDCN…KLTH), 640–662 (YQCS…YLIH), and 668–690 (FECS…QLTH). Lys698 is covalently cross-linked (Glycyl lysine isopeptide (Lys-Gly) (interchain with G-Cter in SUMO2)).

The protein belongs to the krueppel C2H2-type zinc-finger protein family.

The protein resides in the nucleus. Functionally, may be involved in transcriptional regulation. In Mus musculus (Mouse), this protein is Zinc finger protein 770 (Znf770).